The chain runs to 466 residues: tRNA-2-methylthio-N(6)-dimethylallyladenosine synthase (466 aa).

The region spanning 5–125 (RKLHIKSYGC…LPELLARAGR (121 aa)) is the MTTase N-terminal domain. Positions 14, 50, 88, 166, 170, and 173 each coordinate [4Fe-4S] cluster. The Radical SAM core domain occupies 152–384 (RARGVSAFVT…QSLIDSQQAA (233 aa)). The region spanning 387–449 (KAAIGTVVDV…RYSLLGELVA (63 aa)) is the TRAM domain.

This sequence belongs to the methylthiotransferase family. MiaB subfamily. In terms of assembly, monomer. It depends on [4Fe-4S] cluster as a cofactor.

Its subcellular location is the cytoplasm. It catalyses the reaction N(6)-dimethylallyladenosine(37) in tRNA + (sulfur carrier)-SH + AH2 + 2 S-adenosyl-L-methionine = 2-methylsulfanyl-N(6)-dimethylallyladenosine(37) in tRNA + (sulfur carrier)-H + 5'-deoxyadenosine + L-methionine + A + S-adenosyl-L-homocysteine + 2 H(+). In terms of biological role, catalyzes the methylthiolation of N6-(dimethylallyl)adenosine (i(6)A), leading to the formation of 2-methylthio-N6-(dimethylallyl)adenosine (ms(2)i(6)A) at position 37 in tRNAs that read codons beginning with uridine. This is tRNA-2-methylthio-N(6)-dimethylallyladenosine synthase from Bradyrhizobium sp. (strain BTAi1 / ATCC BAA-1182).